The chain runs to 461 residues: GTPase Der (461 aa).

EngA-type G domains follow at residues 2 to 164 (QSII…NENF) and 197 to 369 (IKVG…ANFT). Residues 8–15 (GKPNVGKS), 55–59 (DSGGL), 116–119 (NKID), 203–210 (GRVNVGKS), 250–254 (DTAGI), and 314–317 (NKWD) contribute to the GTP site. Residues 370–454 (QKIPTAKLNA…PLIIVSRKKG (85 aa)) enclose the KH-like domain.

This sequence belongs to the TRAFAC class TrmE-Era-EngA-EngB-Septin-like GTPase superfamily. EngA (Der) GTPase family. In terms of assembly, associates with the 50S ribosomal subunit.

Its function is as follows. GTPase that plays an essential role in the late steps of ribosome biogenesis. This is GTPase Der from Campylobacter lari (strain RM2100 / D67 / ATCC BAA-1060).